The following is a 446-amino-acid chain: N-succinylarginine dihydrolase (446 aa).

Substrate contacts are provided by residues 19–28, Asn-110, and 137–138; these read AGLSFGNEAS and HR. Glu-174 is an active-site residue. Arg-213 is a substrate binding site. His-249 is a catalytic residue. Residues Asp-251 and Asn-364 each coordinate substrate. Cys-370 functions as the Nucleophile in the catalytic mechanism.

This sequence belongs to the succinylarginine dihydrolase family. As to quaternary structure, homodimer.

The enzyme catalyses N(2)-succinyl-L-arginine + 2 H2O + 2 H(+) = N(2)-succinyl-L-ornithine + 2 NH4(+) + CO2. The protein operates within amino-acid degradation; L-arginine degradation via AST pathway; L-glutamate and succinate from L-arginine: step 2/5. Its function is as follows. Catalyzes the hydrolysis of N(2)-succinylarginine into N(2)-succinylornithine, ammonia and CO(2). The sequence is that of N-succinylarginine dihydrolase from Serratia proteamaculans (strain 568).